A 78-amino-acid chain; its full sequence is Acyl carrier protein (78 aa).

In terms of domain architecture, Carrier spans 2–77 (SNIEQQVKKI…LAIDYINAHN (76 aa)). At serine 37 the chain carries O-(pantetheine 4'-phosphoryl)serine.

It belongs to the acyl carrier protein (ACP) family. Post-translationally, 4'-phosphopantetheine is transferred from CoA to a specific serine of apo-ACP by AcpS. This modification is essential for activity because fatty acids are bound in thioester linkage to the sulfhydryl of the prosthetic group.

It localises to the cytoplasm. Its pathway is lipid metabolism; fatty acid biosynthesis. Functionally, carrier of the growing fatty acid chain in fatty acid biosynthesis. This Neisseria gonorrhoeae (strain ATCC 700825 / FA 1090) protein is Acyl carrier protein.